Consider the following 248-residue polypeptide: Clathrin light chain A (248 aa).

A disordered region spans residues 1 to 92 (MAELDPFGAP…YYQESNGPTD (92 aa)). The span at 13–25 (APGGPALGNGVAG) shows a compositional bias: gly residues. Positions 61–71 (GPQPHGEPPGG) are enriched in pro residues. Residues 100–162 (VDRLQSEPES…QLQKTKANNR (63 aa)) form an involved in binding clathrin heavy chain region. Phosphoserine is present on residues serine 105 and serine 206. An N6-acetyllysine modification is found at lysine 223. The residue at position 236 (serine 236) is a Phosphoserine. Lysine 242 is modified (N6-acetyllysine).

This sequence belongs to the clathrin light chain family. In terms of assembly, clathrin coats are formed from molecules containing 3 heavy chains and 3 light chains. Interacts with CALY; the interaction stimulates clathrin self-assembly and clathrin-mediated endocytosis. Interacts with CKAP5 and TACC3 forming the TACC3/ch-TOG/clathrin complex located at spindle inter-microtubules bridges; the complex implicates clathrin triskelions.

The protein localises to the cytoplasmic vesicle membrane. Its subcellular location is the membrane. It is found in the coated pit. The protein resides in the cytoplasm. It localises to the cytoskeleton. The protein localises to the spindle. Functionally, clathrin is the major protein of the polyhedral coat of coated pits and vesicles. Acts as a component of the TACC3/ch-TOG/clathrin complex proposed to contribute to stabilization of kinetochore fibers of the mitotic spindle by acting as inter-microtubule bridge. This is Clathrin light chain A (CLTA) from Homo sapiens (Human).